The chain runs to 95 residues: uncharacterized protein (95 aa).

This is an uncharacterized protein from Sulfolobus islandicus rod-shaped virus 1 (SIRV-1).